Reading from the N-terminus, the 413-residue chain is 5'-deoxyadenosine deaminase (413 aa).

The Zn(2+) site is built by histidine 57 and histidine 59. Residues glutamate 86 and histidine 171 each coordinate substrate. A Zn(2+)-binding site is contributed by histidine 198. Substrate contacts are provided by glutamate 201 and aspartate 286. Position 286 (aspartate 286) interacts with Zn(2+).

It belongs to the metallo-dependent hydrolases superfamily. MTA/SAH deaminase family. Homotetramer. Zn(2+) is required as a cofactor.

It catalyses the reaction 5'-deoxyadenosine + H2O + H(+) = 5'-deoxyinosine + NH4(+). It carries out the reaction S-adenosyl-L-homocysteine + H2O + H(+) = S-inosyl-L-homocysteine + NH4(+). The catalysed reaction is S-methyl-5'-thioadenosine + H2O + H(+) = S-methyl-5'-thioinosine + NH4(+). The enzyme catalyses adenosine + H2O + H(+) = inosine + NH4(+). It participates in amino-acid biosynthesis; S-adenosyl-L-methionine biosynthesis. Its function is as follows. Catalyzes the deamination of three SAM-derived enzymatic products, namely 5'-deoxyadenosine, S-adenosyl-L-homocysteine, and 5'-methylthioadenosine, to produce the inosine analogs. Can also deaminate adenosine. The preferred substrate for this enzyme is 5'-deoxyadenosine, but all these substrates are efficiently deaminated. Likely functions in a S-adenosyl-L-methionine (SAM) recycling pathway from S-adenosyl-L-homocysteine (SAH) produced from SAM-dependent methylation reactions. May also be involved in the recycling of 5'-deoxyadenosine, whereupon the 5'-deoxyribose moiety of 5'-deoxyinosine is further metabolized to deoxyhexoses used for the biosynthesis of aromatic amino acids in methanogens. The sequence is that of 5'-deoxyadenosine deaminase from Methanothrix thermoacetophila (strain DSM 6194 / JCM 14653 / NBRC 101360 / PT) (Methanosaeta thermophila).